Consider the following 177-residue polypeptide: MEQIIAKRYASALFDVAKKEDRVKEYYEELKKAVEILQTEAVWKIFVNKSIDKTKKMKFVEEVLEGFSKEIVNFVKVAISKHRENLIKEILNEFEALYKAYFNMIDVKVISAYPLKEEVLNLVREKLEKKYNKKVNLIPVVDKEILGGLKLVIGNTVIDGSIKARLEALLKNMRQAV.

It belongs to the ATPase delta chain family. F-type ATPases have 2 components, F(1) - the catalytic core - and F(0) - the membrane proton channel. F(1) has five subunits: alpha(3), beta(3), gamma(1), delta(1), epsilon(1). F(0) has three main subunits: a(1), b(2) and c(10-14). The alpha and beta chains form an alternating ring which encloses part of the gamma chain. F(1) is attached to F(0) by a central stalk formed by the gamma and epsilon chains, while a peripheral stalk is formed by the delta and b chains.

It is found in the cell membrane. F(1)F(0) ATP synthase produces ATP from ADP in the presence of a proton or sodium gradient. F-type ATPases consist of two structural domains, F(1) containing the extramembraneous catalytic core and F(0) containing the membrane proton channel, linked together by a central stalk and a peripheral stalk. During catalysis, ATP synthesis in the catalytic domain of F(1) is coupled via a rotary mechanism of the central stalk subunits to proton translocation. In terms of biological role, this protein is part of the stalk that links CF(0) to CF(1). It either transmits conformational changes from CF(0) to CF(1) or is implicated in proton conduction. In Caldanaerobacter subterraneus subsp. tengcongensis (strain DSM 15242 / JCM 11007 / NBRC 100824 / MB4) (Thermoanaerobacter tengcongensis), this protein is ATP synthase subunit delta.